The primary structure comprises 243 residues: MAASSISSPWGKHVFKAILMVLVALILLHSALAQSRRDFAPPGQQKREAPVDVLTQIGRSVRGTLDAWIGPETMHLVSESSSQVLWAISSAISVAFFALSGIAAQLLNALGLAGDYLAQGLKLSPGQVQTFLLWGAGALVVYWLLSLLLGLVLALLGRILWGLKLVIFLAGFVALMRSVPDPSTRALLLLALLILYALLSRLTGSRASGAQLEAKVRGLERQVEELRWRQRRAAKGARSVEEE.

Residues 1–33 (MAASSISSPWGKHVFKAILMVLVALILLHSALA) form the signal peptide. The Lumenal segment spans residues 34–83 (QSRRDFAPPGQQKREAPVDVLTQIGRSVRGTLDAWIGPETMHLVSESSSQ). A helical membrane pass occupies residues 84-104 (VLWAISSAISVAFFALSGIAA). Over 105-135 (QLLNALGLAGDYLAQGLKLSPGQVQTFLLWG) the chain is Cytoplasmic. The chain crosses the membrane as a helical span at residues 136–156 (AGALVVYWLLSLLLGLVLALL). At 157-185 (GRILWGLKLVIFLAGFVALMRSVPDPSTR) the chain is on the lumenal side. The helical transmembrane segment at 186 to 205 (ALLLLALLILYALLSRLTGS) threads the bilayer. Residues 206 to 243 (RASGAQLEAKVRGLERQVEELRWRQRRAAKGARSVEEE) are Cytoplasmic-facing.

In terms of assembly, homooligomer. Interacts with CRYAB; in the cellular response to DNA damage.

It localises to the nucleus outer membrane. Its subcellular location is the endoplasmic reticulum membrane. The protein localises to the sarcoplasmic reticulum membrane. The enzyme catalyses K(+)(in) = K(+)(out). It carries out the reaction Ca(2+)(in) = Ca(2+)(out). Functionally, functions as a voltage-gated monoatomic cation channel permeable to both potassium and calcium. Plays a role in the cellular response to DNA damage. The sequence is that of Voltage-gated monoatomic cation channel TMEM109 from Homo sapiens (Human).